A 104-amino-acid chain; its full sequence is MNRDHFYTLNIAEIAERIGNDDCAYQVLMAFINENGEAQMLNKTAVAEMIQLSKPTVFATVNSFYCAGYIDETRVGRSKIYTLSDLGVEIVECFKQKAMEMRNL.

2 consecutive DNA-binding regions (HTH) follow at residues 43–50 (KTAVAEMI) and 54–65 (KPTVFATVNSFY).

In terms of assembly, homodimer. Binds to tubC DNA, the TubR-DNA complex binds to TubZ.

A DNA-binding protein that is part of the type III plasmid partition system used to ensure correct segregation of the pBtoxis plasmid. Cooperatively binds to the centromere-like site (tubC), which may seed filament formation by the TubZ polymerizing GTPase, stabilizing TubZ filaments. TubR-tubC complexes track the depolymerizing minus end of the filament, probably pulling plasmid within the cell. Required for plasmid replication. Negatively regulates levels of TubZ; its effect on RNA expression has not been shown. Specifically binds iterons, 12-bp imperfect direct repeats that function as a plasmid origin of replication. Four TubR dimers bind to tubC, forming an extended bent DNA-protein filament with protein wrapping helically around the outside of the DNA. This is DNA-binding transcriptional repressor TubR from Bacillus thuringiensis subsp. israelensis.